The chain runs to 460 residues: Cysteine--tRNA ligase (460 aa).

Residue Cys28 coordinates Zn(2+). The 'HIGH' region motif lies at 30–40; it reads MTVYDYCHLGH. Zn(2+)-binding residues include Cys209, His234, and Glu238. Residues 266-270 carry the 'KMSKS' region motif; the sequence is KMSKS. An ATP-binding site is contributed by Lys269.

The protein belongs to the class-I aminoacyl-tRNA synthetase family. Monomer. It depends on Zn(2+) as a cofactor.

It localises to the cytoplasm. It catalyses the reaction tRNA(Cys) + L-cysteine + ATP = L-cysteinyl-tRNA(Cys) + AMP + diphosphate. The protein is Cysteine--tRNA ligase of Pseudomonas aeruginosa (strain UCBPP-PA14).